Consider the following 31-residue polypeptide: Photosystem I reaction center subunit XII (31 aa).

Residues 7 to 26 (QISIILLIALIPAFFSLKLG) traverse the membrane as a helical segment.

This sequence belongs to the PsaM family.

It is found in the plastid. Its subcellular location is the chloroplast thylakoid membrane. The polypeptide is Photosystem I reaction center subunit XII (Euglena myxocylindracea).